The following is a 127-amino-acid chain: Large ribosomal subunit protein bL17 (127 aa).

It belongs to the bacterial ribosomal protein bL17 family. As to quaternary structure, part of the 50S ribosomal subunit. Contacts protein L32.

The chain is Large ribosomal subunit protein bL17 from Lactobacillus johnsonii (strain CNCM I-12250 / La1 / NCC 533).